The following is a 520-amino-acid chain: Transactivator/viroplasmin protein (520 aa).

Residues 487 to 520 are disordered; that stretch reads QDASADSGPKDGPPPTRSIVEKEDVPTTSSKQVD.

The protein belongs to the caulimoviridae viroplasmin family.

The protein resides in the host cytoplasm. Functionally, enhances the ribosomal termination-reinitiation event leading to the translation of major open reading frames on the polycistronic viral RNAs. This chain is Transactivator/viroplasmin protein, found in Cauliflower mosaic virus (strain CM-1841) (CaMV).